We begin with the raw amino-acid sequence, 255 residues long: F-box/SPRY domain-containing protein 1 (255 aa).

The 49-residue stretch at 3–51 (DPVAALCNYNVLEVIFSYLELDDLSHCSQVCKSWNLFLNDENSDVWRWH) folds into the F-box domain. The region spanning 61–253 (LKSDLLSSVS…VSMVYLGTPM (193 aa)) is the B30.2/SPRY domain.

This sequence belongs to the FBXO45/Fsn family. In terms of assembly, component of an E3 ubiquitin ligase complex composed of hiw and Fsn.

It localises to the synapse. The protein operates within protein modification; protein ubiquitination. Its function is as follows. Required in the presynaptic motoneuron to down-regulate the levels of wnd and restrain synaptic terminal growth at the neuromuscular junction (NMJ). In Drosophila ananassae (Fruit fly), this protein is F-box/SPRY domain-containing protein 1.